The following is a 278-amino-acid chain: Non-haem bromoperoxidase BPO-A2 (278 aa).

Positions 26–264 constitute an AB hydrolase-1 domain; that stretch reads PVVLIHGFPL…GAPHGLLWTH (239 aa). Catalysis depends on residues Ser-99, Asp-229, and His-258.

This sequence belongs to the AB hydrolase superfamily. Bacterial non-heme haloperoxidase / perhydrolase family. In terms of assembly, homotrimer.

Its function is as follows. May be a chlorinating enzyme involved in 7-chlorotetracycline biosynthesis. This is Non-haem bromoperoxidase BPO-A2 (bpoA2) from Kitasatospora aureofaciens (Streptomyces aureofaciens).